The sequence spans 301 residues: Ribonuclease Z (301 aa).

7 residues coordinate Zn(2+): His-61, His-63, Asp-65, His-66, His-140, Asp-211, and His-269. Asp-65 serves as the catalytic Proton acceptor.

The protein belongs to the RNase Z family. As to quaternary structure, homodimer. The cofactor is Zn(2+).

It carries out the reaction Endonucleolytic cleavage of RNA, removing extra 3' nucleotides from tRNA precursor, generating 3' termini of tRNAs. A 3'-hydroxy group is left at the tRNA terminus and a 5'-phosphoryl group is left at the trailer molecule.. Zinc phosphodiesterase, which displays some tRNA 3'-processing endonuclease activity. Probably involved in tRNA maturation, by removing a 3'-trailer from precursor tRNA. The protein is Ribonuclease Z of Bradyrhizobium diazoefficiens (strain JCM 10833 / BCRC 13528 / IAM 13628 / NBRC 14792 / USDA 110).